The chain runs to 1280 residues: Dynactin subunit 1 (1280 aa).

Residues 1 to 26 (MAQSKRHMYNRTPSGSRMSTEASARP) are disordered. The segment covering 11-22 (RTPSGSRMSTEA) has biased composition (polar residues). The CAP-Gly domain maps to 48–90 (GATLFATGKWVGVILDEAKGKNDGTVQGRKYFTCDEGHGIFVR). The tract at residues 99–223 (DGADTTSPET…SKEEEGLRDQ (125 aa)) is disordered. The span at 102-114 (DTTSPETPDSSAS) shows a compositional bias: polar residues. Phosphothreonine occurs at positions 108, 145, 146, and 147. Over residues 129 to 152 (SKLRGLKPKKAPTARKTTTRRPKP) the composition is skewed to basic residues. The segment covering 161–205 (AGPSSSLGPSGSASAGELSSSEPSTPAQTPLAAPIIPTPALTSPG) has biased composition (low complexity). At serine 179 the chain carries Phosphoserine; by PLK1. Serine 212 carries the post-translational modification Phosphoserine; by CDK1. The segment covering 214 to 223 (SKEEEGLRDQ) has biased composition (basic and acidic residues). Coiled-coil stretches lie at residues 214-513 (SKEE…ADYQ) and 942-1048 (LKLE…EGLR). Residues 910 to 1280 (EYDAERPPSK…LHQLHGRLIS (371 aa)) are interaction with HPS6. The tract at residues 1064 to 1089 (GEEQQRGGTPGQAPGALPGPGPVKDS) is disordered. A coiled-coil region spans residues 1184-1213 (SAQLMEQVAQLKSLSDTIEKLKDEVLKETV).

This sequence belongs to the dynactin 150 kDa subunit family. Monomer and homodimer. Subunit of dynactin, a multiprotein complex part of a tripartite complex with dynein and a adapter, such as BICDL1, BICD2 or HOOK3. The dynactin complex is built around ACTR1A/ACTB filament and consists of an actin-related filament composed of a shoulder domain, a pointed end and a barbed end. Its length is defined by its flexible shoulder domain. The soulder is composed of 2 DCTN1 subunits, 4 DCTN2 and 2 DCTN3. DCTN1/p150(glued) binds directly to microtubules and to cytoplasmic dynein. The 4 DCNT2 (via N-terminus) bind the ACTR1A filament and act as molecular rulers to determine the length. The pointed end is important for binding dynein-dynactin cargo adapters. Consists of 4 subunits: ACTR10, DCNT4, DCTN5 and DCTN6. The barbed end is composed of a CAPZA1:CAPZB heterodimers, which binds ACTR1A/ACTB filament and dynactin and stabilizes dynactin. Interacts with the C-terminus of MAPRE1, MAPRE2 and MAPRE3. Interacts (via C-terminus) with SNX6. Interacts with CLN3, DYNAP, ECPAS and FBXL5. Interacts with MISP; this interaction regulates its distribution at the cell cortex. Interacts with CEP131. Interacts with CEP126. Interacts with CLIP1. Interacts with dynein intermediate chain and dynein heavy chain. Interacts with PLK1 (via POLO-box domain). Interacts with TBCB. Binds preferentially to tyrosinated microtubules than to detyrosinated microtubules. Interacts with PARD6A. Interacts with HPS6. Interacts with KIF3A. Interacts with BICD2. Interacts with DST (isoform 9). Interacts with DST (isoform 1). Identified in a complex with MREG and RILP. Interacts with BCCIP (isoform 2/alpha). Interacts with DCDC1. Interacts with AKNA. Interacts with DYNC1I2. Interacts with RUFY3 and RUFY4. Ubiquitinated by a SCF complex containing FBXL5, leading to its degradation by the proteasome. Post-translationally, phosphorylation by SLK at Thr-145, Thr-146 and Thr-147 targets DCTN1 to the centrosome. It is uncertain if SLK phosphorylates all three threonines or one or two of them. PLK1-mediated phosphorylation at Ser-179 is essential for its localization in the nuclear envelope and promotes its dissociation from microtubules during early mitosis and positively regulates nuclear envelope breakdown during prophase. In terms of tissue distribution, ubiquitous with a high level expression observed in the brain (at protein level).

Its subcellular location is the cytoplasm. The protein resides in the cytoskeleton. It localises to the microtubule organizing center. The protein localises to the centrosome. It is found in the centriole. Its subcellular location is the spindle. The protein resides in the nucleus envelope. It localises to the cell cortex. In terms of biological role, part of the dynactin complex that activates the molecular motor dynein for ultra-processive transport along microtubules. Plays a key role in dynein-mediated retrograde transport of vesicles and organelles along microtubules by recruiting and tethering dynein to microtubules. Binds to both dynein and microtubules providing a link between specific cargos, microtubules and dynein. Essential for targeting dynein to microtubule plus ends, recruiting dynein to membranous cargos and enhancing dynein processivity (the ability to move along a microtubule for a long distance without falling off the track). Can also act as a brake to slow the dynein motor during motility along the microtubule. Can regulate microtubule stability by promoting microtubule formation, nucleation and polymerization and by inhibiting microtubule catastrophe in neurons. Inhibits microtubule catastrophe by binding both to microtubules and to tubulin, leading to enhanced microtubule stability along the axon. Plays a role in metaphase spindle orientation. Plays a role in centriole cohesion and subdistal appendage organization and function. Its recruitment to the centriole in a KIF3A-dependent manner is essential for the maintenance of centriole cohesion and the formation of subdistal appendage. Also required for microtubule anchoring at the mother centriole. Plays a role in primary cilia formation. The chain is Dynactin subunit 1 (Dctn1) from Rattus norvegicus (Rat).